The sequence spans 470 residues: Argininosuccinate lyase (470 aa).

The protein belongs to the lyase 1 family. Argininosuccinate lyase subfamily.

It is found in the cytoplasm. It catalyses the reaction 2-(N(omega)-L-arginino)succinate = fumarate + L-arginine. It functions in the pathway amino-acid biosynthesis; L-arginine biosynthesis; L-arginine from L-ornithine and carbamoyl phosphate: step 3/3. The polypeptide is Argininosuccinate lyase (Mycobacterium marinum (strain ATCC BAA-535 / M)).